The chain runs to 207 residues: Thymidylate kinase (207 aa).

Residues 11 to 49 (EGIDGSGKSTQARRLAEHLRDTGRDPLLTREPGGSPGAE) form a disordered region. 12–19 (GIDGSGKS) lines the ATP pocket. The span at 24–38 (RLAEHLRDTGRDPLL) shows a compositional bias: basic and acidic residues.

This sequence belongs to the thymidylate kinase family.

It carries out the reaction dTMP + ATP = dTDP + ADP. Functionally, phosphorylation of dTMP to form dTDP in both de novo and salvage pathways of dTTP synthesis. In Dinoroseobacter shibae (strain DSM 16493 / NCIMB 14021 / DFL 12), this protein is Thymidylate kinase.